Consider the following 498-residue polypeptide: Acetylcholine receptor subunit alpha-type acr-16 (498 aa).

The N-terminal stretch at 1–19 is a signal peptide; it reads MSVCTLLISCAILAAPTLG. Residues 20–230 are Extracellular-facing; that stretch reads SLQERRLYED…FYLHMRRRTL (211 aa). N-linked (GlcNAc...) asparagine glycosylation is found at Asn43 and Asn93. 2 cysteine pairs are disulfide-bonded: Cys147–Cys161 and Cys211–Cys212. 3 consecutive transmembrane segments (helical) span residues 231 to 252, 261 to 279, and 295 to 314; these read YYGF…LGFT, ITLQ…SIVS, and FFTC…VYVL. Residues 315-472 are Cytoplasmic-facing; it reads NLHYRTPETH…WKFAAMVVDR (158 aa). The helical transmembrane segment at 473 to 493 threads the bilayer; the sequence is LCLYVFTIFIIVSTIGIFWSA.

Belongs to the ligand-gated ion channel (TC 1.A.9) family. Acetylcholine receptor (TC 1.A.9.1) subfamily. In terms of tissue distribution, expressed in the body wall muscle.

Its subcellular location is the postsynaptic cell membrane. It is found in the cell membrane. Its function is as follows. After binding acetylcholine, the AChR responds by an extensive change in conformation that affects all subunits and leads to opening of an ion-conducting channel across the plasma membrane. A subunit of the levamisole-insensitive nicotinic receptor. The sequence is that of Acetylcholine receptor subunit alpha-type acr-16 (acr-16) from Caenorhabditis elegans.